A 224-amino-acid polypeptide reads, in one-letter code: Redox-sensing transcriptional repressor Rex (224 aa).

A DNA-binding region (H-T-H motif) is located at residues 17-56; that stretch reads RYHRYLEELLKNDVKRISSRELSEKMGVTASQIRQDLNNF. 91 to 96 lines the NAD(+) pocket; the sequence is GAGNLG.

The protein belongs to the transcriptional regulatory Rex family. In terms of assembly, homodimer.

The protein resides in the cytoplasm. In terms of biological role, modulates transcription in response to changes in cellular NADH/NAD(+) redox state. This chain is Redox-sensing transcriptional repressor Rex, found in Thermoanaerobacter sp. (strain X514).